Consider the following 1088-residue polypeptide: DNA-directed RNA polymerase subunit beta (1088 aa).

The protein belongs to the RNA polymerase beta chain family. In plastids the minimal PEP RNA polymerase catalytic core is composed of four subunits: alpha, beta, beta', and beta''. When a (nuclear-encoded) sigma factor is associated with the core the holoenzyme is formed, which can initiate transcription.

The protein localises to the plastid. It is found in the chloroplast. The enzyme catalyses RNA(n) + a ribonucleoside 5'-triphosphate = RNA(n+1) + diphosphate. Functionally, DNA-dependent RNA polymerase catalyzes the transcription of DNA into RNA using the four ribonucleoside triphosphates as substrates. This Ostreococcus tauri protein is DNA-directed RNA polymerase subunit beta.